The chain runs to 597 residues: Aspartate--tRNA(Asp/Asn) ligase (597 aa).

Residue Glu-175 participates in L-aspartate binding. The aspartate stretch occupies residues 199–202; the sequence is QQYK. The L-aspartate site is built by Arg-221 and His-454. 221–223 contacts ATP; it reads RDE. Glu-488 serves as a coordination point for ATP. An L-aspartate-binding site is contributed by Arg-495. ATP is bound at residue 540–543; that stretch reads GVDR.

It belongs to the class-II aminoacyl-tRNA synthetase family. Type 1 subfamily. As to quaternary structure, homodimer.

Its subcellular location is the cytoplasm. The enzyme catalyses tRNA(Asx) + L-aspartate + ATP = L-aspartyl-tRNA(Asx) + AMP + diphosphate. Functionally, aspartyl-tRNA synthetase with relaxed tRNA specificity since it is able to aspartylate not only its cognate tRNA(Asp) but also tRNA(Asn). Reaction proceeds in two steps: L-aspartate is first activated by ATP to form Asp-AMP and then transferred to the acceptor end of tRNA(Asp/Asn). This is Aspartate--tRNA(Asp/Asn) ligase from Bartonella quintana (strain Toulouse) (Rochalimaea quintana).